The primary structure comprises 364 residues: tRNA N6-adenosine threonylcarbamoyltransferase (364 aa).

Residues H118 and H122 each coordinate Fe cation. Substrate contacts are provided by residues L140–G144, D173, G186, and N288. D316 serves as a coordination point for Fe cation.

Belongs to the KAE1 / TsaD family. Fe(2+) serves as cofactor.

The protein localises to the cytoplasm. The enzyme catalyses L-threonylcarbamoyladenylate + adenosine(37) in tRNA = N(6)-L-threonylcarbamoyladenosine(37) in tRNA + AMP + H(+). Functionally, required for the formation of a threonylcarbamoyl group on adenosine at position 37 (t(6)A37) in tRNAs that read codons beginning with adenine. Is involved in the transfer of the threonylcarbamoyl moiety of threonylcarbamoyl-AMP (TC-AMP) to the N6 group of A37, together with TsaE and TsaB. TsaD likely plays a direct catalytic role in this reaction. This is tRNA N6-adenosine threonylcarbamoyltransferase from Cereibacter sphaeroides (strain KD131 / KCTC 12085) (Rhodobacter sphaeroides).